The primary structure comprises 119 residues: Large ribosomal subunit protein uL18 (119 aa).

Positions 54-76 are disordered; it reads LTSASTLADDVEGETPTEESRSV.

It belongs to the universal ribosomal protein uL18 family. Part of the 50S ribosomal subunit; part of the 5S rRNA/L5/L18/L25 subcomplex. Contacts the 5S and 23S rRNAs.

Its function is as follows. This is one of the proteins that bind and probably mediate the attachment of the 5S RNA into the large ribosomal subunit, where it forms part of the central protuberance. The protein is Large ribosomal subunit protein uL18 of Salinibacter ruber (strain DSM 13855 / M31).